Reading from the N-terminus, the 231-residue chain is RNA pyrophosphohydrolase (231 aa).

The 144-residue stretch at 6 to 149 folds into the Nudix hydrolase domain; sequence GFRPNVGIIL…KRDVYQLALT (144 aa). Residues 38–59 carry the Nudix box motif; it reads GGIKYGETPEQAMYRELHEEIG. The disordered stretch occupies residues 168–200; sequence VHHGRHGSGQRYAQQPGQPPTLAQRRPLQPVTQ.

It belongs to the Nudix hydrolase family. RppH subfamily. The cofactor is a divalent metal cation.

In terms of biological role, accelerates the degradation of transcripts by removing pyrophosphate from the 5'-end of triphosphorylated RNA, leading to a more labile monophosphorylated state that can stimulate subsequent ribonuclease cleavage. The chain is RNA pyrophosphohydrolase from Cupriavidus pinatubonensis (strain JMP 134 / LMG 1197) (Cupriavidus necator (strain JMP 134)).